A 393-amino-acid chain; its full sequence is SH3 domain-binding protein 5-like (393 aa).

2 disordered regions span residues 1–59 (MAEL…LDPR) and 272–332 (HARR…DTDT). Phosphothreonine is present on Thr13. The segment covering 18–28 (LRPEVVEDEVP) has biased composition (basic and acidic residues). Phosphoserine is present on residues Ser30 and Ser49. 2 coiled-coil regions span residues 59–140 (RIQE…YERA) and 169–272 (WQEM…EQIH). Gly residues predominate over residues 304 to 313 (GDSGIEGAEG). Over residues 317–332 (EEGSSLGPGPAPDTDT) the composition is skewed to low complexity. Residues Ser343, Ser350, Ser358, Ser362, and Ser378 each carry the phosphoserine modification. The interval 364–393 (DGQELGTRSGGRRGSDGGVRGGRHQRSVSL) is disordered. Positions 384–393 (GGRHQRSVSL) are enriched in basic residues.

Belongs to the SH3BP5 family.

Its function is as follows. Functions as a guanine nucleotide exchange factor (GEF) for RAB11A. The chain is SH3 domain-binding protein 5-like (SH3BP5L) from Pongo abelii (Sumatran orangutan).